We begin with the raw amino-acid sequence, 419 residues long: Gamma-glutamyl phosphate reductase (419 aa).

Belongs to the gamma-glutamyl phosphate reductase family.

Its subcellular location is the cytoplasm. The catalysed reaction is L-glutamate 5-semialdehyde + phosphate + NADP(+) = L-glutamyl 5-phosphate + NADPH + H(+). It functions in the pathway amino-acid biosynthesis; L-proline biosynthesis; L-glutamate 5-semialdehyde from L-glutamate: step 2/2. Catalyzes the NADPH-dependent reduction of L-glutamate 5-phosphate into L-glutamate 5-semialdehyde and phosphate. The product spontaneously undergoes cyclization to form 1-pyrroline-5-carboxylate. The chain is Gamma-glutamyl phosphate reductase from Syntrophomonas wolfei subsp. wolfei (strain DSM 2245B / Goettingen).